We begin with the raw amino-acid sequence, 135 residues long: HTH-type transcriptional activator AarP (135 aa).

The HTH araC/xylS-type domain maps to 22–120 (SEILVWIEGN…GISPSLYRLS (99 aa)). DNA-binding regions (H-T-H motif) lie at residues 39 to 60 (DDIAQHSGYTKWHLQRVFRKIV) and 87 to 110 (VIDIALKYQFDSQQSFAKRFKAYL).

Its function is as follows. Transcriptional activator of 2'-N-acetyltransferase. This Providencia stuartii protein is HTH-type transcriptional activator AarP (aarP).